We begin with the raw amino-acid sequence, 150 residues long: UPF0756 membrane protein Asuc_1151 (150 aa).

4 consecutive transmembrane segments (helical) span residues 1-21 (MSLH…LGVL), 52-72 (YGLN…IVAG), 82-102 (LLHW…WLAG), and 123-143 (ILGV…AGIL).

The protein belongs to the UPF0756 family.

Its subcellular location is the cell membrane. This is UPF0756 membrane protein Asuc_1151 from Actinobacillus succinogenes (strain ATCC 55618 / DSM 22257 / CCUG 43843 / 130Z).